Reading from the N-terminus, the 327-residue chain is Putative cyclin-dependent kinase F-2 (327 aa).

The Protein kinase domain maps to Tyr-4 to Phe-295. ATP-binding positions include Ile-10–Val-18 and Lys-33. The active-site Proton acceptor is the Asp-134. Thr-167 carries the post-translational modification Phosphothreonine.

This sequence belongs to the protein kinase superfamily. CMGC Ser/Thr protein kinase family. CDC2/CDKX subfamily.

It catalyses the reaction L-seryl-[protein] + ATP = O-phospho-L-seryl-[protein] + ADP + H(+). The enzyme catalyses L-threonyl-[protein] + ATP = O-phospho-L-threonyl-[protein] + ADP + H(+). The catalysed reaction is [DNA-directed RNA polymerase] + ATP = phospho-[DNA-directed RNA polymerase] + ADP + H(+). The chain is Putative cyclin-dependent kinase F-2 (CDKF-2) from Oryza sativa subsp. japonica (Rice).